Here is a 401-residue protein sequence, read N- to C-terminus: 1-deoxy-D-xylulose 5-phosphate reductoisomerase (401 aa).

Residues Thr-10, Gly-11, Ser-12, Ile-13, Asn-38, and Asn-124 each contribute to the NADPH site. Residue Lys-125 coordinates 1-deoxy-D-xylulose 5-phosphate. Residue Glu-126 participates in NADPH binding. Asp-150 contributes to the Mn(2+) binding site. 1-deoxy-D-xylulose 5-phosphate-binding residues include Ser-151, Glu-152, Ser-186, and His-209. Glu-152 contacts Mn(2+). Residue Gly-215 coordinates NADPH. Residues Ser-222, Asn-227, Lys-228, and Glu-231 each contribute to the 1-deoxy-D-xylulose 5-phosphate site. Position 231 (Glu-231) interacts with Mn(2+).

The protein belongs to the DXR family. The cofactor is Mg(2+). Requires Mn(2+) as cofactor.

It carries out the reaction 2-C-methyl-D-erythritol 4-phosphate + NADP(+) = 1-deoxy-D-xylulose 5-phosphate + NADPH + H(+). The protein operates within isoprenoid biosynthesis; isopentenyl diphosphate biosynthesis via DXP pathway; isopentenyl diphosphate from 1-deoxy-D-xylulose 5-phosphate: step 1/6. In terms of biological role, catalyzes the NADPH-dependent rearrangement and reduction of 1-deoxy-D-xylulose-5-phosphate (DXP) to 2-C-methyl-D-erythritol 4-phosphate (MEP). The chain is 1-deoxy-D-xylulose 5-phosphate reductoisomerase from Vibrio campbellii (strain ATCC BAA-1116).